We begin with the raw amino-acid sequence, 908 residues long: Metabotropic glutamate receptor 8 (908 aa).

The first 33 residues, 1–33, serve as a signal peptide directing secretion; the sequence is MVCEGKRSTSCPCFFLLTAKFYWILTMMQRTHS. Residues 34–583 lie on the Extracellular side of the membrane; it reads QEYAHSIRLD…IIKLEWHSPW (550 aa). Cysteine 64 and cysteine 106 are oxidised to a cystine. N-linked (GlcNAc...) asparagine glycosylation is present at asparagine 95. L-glutamate is bound by residues serine 156, 177 to 179, and tyrosine 227; that span reads AST. Cystine bridges form between cysteine 246-cysteine 534, cysteine 369-cysteine 384, cysteine 424-cysteine 431, cysteine 516-cysteine 535, cysteine 520-cysteine 538, cysteine 541-cysteine 553, and cysteine 556-cysteine 569. Asparagine 298 is a glycosylation site (N-linked (GlcNAc...) asparagine). Residue aspartate 309 participates in L-glutamate binding. Lysine 401 is an L-glutamate binding site. N-linked (GlcNAc...) asparagine glycosylation is found at asparagine 452 and asparagine 480. A glycan (N-linked (GlcNAc...) asparagine) is linked at asparagine 565. The chain crosses the membrane as a helical span at residues 584–608; it reads AVVPVFIAILGIIATTFVIVTFVRY. Residues 609-620 lie on the Cytoplasmic side of the membrane; sequence NDTPIVRASGRE. Residues 621 to 641 form a helical membrane-spanning segment; sequence LSYVLLTGIFLCYSITFLMIA. Over 642–647 the chain is Extracellular; it reads APDTII. A helical membrane pass occupies residues 648–668; the sequence is CSFRRIFLGLGMCFSYAALLT. Over 669–695 the chain is Cytoplasmic; it reads KTNRIHRIFEQGKKSVTAPKFISPASQ. Residues 696–716 traverse the membrane as a helical segment; that stretch reads LVITFSLISVQLLGVFVWFVV. At 717 to 746 the chain is on the extracellular side; that stretch reads DPPHTIIDYGEQRTLDPENARGVLKCDISD. A helical membrane pass occupies residues 747-768; the sequence is LSLICSLGYSILLMVTCTVYAI. Residues 769–781 lie on the Cytoplasmic side of the membrane; it reads KTRGVPETFNEAK. Residues 782-803 form a helical membrane-spanning segment; the sequence is PIGFTMYTTCIIWLAFIPIFFG. Residues 804–818 lie on the Extracellular side of the membrane; that stretch reads TAQSAEKMYIQTTTL. Residues 819 to 843 traverse the membrane as a helical segment; it reads TVSMSLSASVSLGMLYMPKVYIIIF. Residues 844–908 lie on the Cytoplasmic side of the membrane; that stretch reads HPEQNVQKRK…TYISYSNHSI (65 aa). A Glycyl lysine isopeptide (Lys-Gly) (interchain with G-Cter in SUMO1) cross-link involves residue lysine 882.

This sequence belongs to the G-protein coupled receptor 3 family. In terms of assembly, interacts with PICK1. Strongly expressed in olfactory bulb, accessory olfactory bulb, and mammillary body. Weaker expression in the retina, and in scattered cells in the cortex and hindbrain.

The protein localises to the cell membrane. Functionally, G-protein coupled receptor for glutamate. Ligand binding causes a conformation change that triggers signaling via guanine nucleotide-binding proteins (G proteins) and modulates the activity of down-stream effectors. Signaling inhibits adenylate cyclase activity. This Mus musculus (Mouse) protein is Metabotropic glutamate receptor 8 (Grm8).